Reading from the N-terminus, the 357-residue chain is Fructose-bisphosphate aldolase (357 aa).

Substrate-binding residues include arginine 49 and lysine 140. Glutamate 183 functions as the Proton acceptor in the catalytic mechanism. Lysine 225 acts as the Schiff-base intermediate with dihydroxyacetone-P in catalysis.

This sequence belongs to the class I fructose-bisphosphate aldolase family.

The catalysed reaction is beta-D-fructose 1,6-bisphosphate = D-glyceraldehyde 3-phosphate + dihydroxyacetone phosphate. The protein operates within carbohydrate degradation; glycolysis; D-glyceraldehyde 3-phosphate and glycerone phosphate from D-glucose: step 4/4. This Dictyostelium discoideum (Social amoeba) protein is Fructose-bisphosphate aldolase (fba).